The sequence spans 313 residues: Ribosomal protein L11 methyltransferase (313 aa).

S-adenosyl-L-methionine is bound by residues Thr163, Gly184, Asp206, and Asn249.

The protein belongs to the methyltransferase superfamily. PrmA family.

Its subcellular location is the cytoplasm. The enzyme catalyses L-lysyl-[protein] + 3 S-adenosyl-L-methionine = N(6),N(6),N(6)-trimethyl-L-lysyl-[protein] + 3 S-adenosyl-L-homocysteine + 3 H(+). Its function is as follows. Methylates ribosomal protein L11. The protein is Ribosomal protein L11 methyltransferase of Brevibacillus brevis (strain 47 / JCM 6285 / NBRC 100599).